The sequence spans 211 residues: Protein-methionine-sulfoxide reductase heme-binding subunit MsrQ (211 aa).

4 helical membrane-spanning segments follow: residues 17–37 (LAGLLPFLWLVWAINHGGLGA), 82–102 (LWCFAWATLHLTSYALLELGV), 116–136 (PYLTLGIISWVILLALAFTST), and 153–173 (FVYLVAILAPIHYLWSVKIIS).

The protein belongs to the MsrQ family. As to quaternary structure, heterodimer of a catalytic subunit (MsrP) and a heme-binding subunit (MsrQ). FMN is required as a cofactor. Requires heme b as cofactor.

It is found in the cell inner membrane. Part of the MsrPQ system that repairs oxidized periplasmic proteins containing methionine sulfoxide residues (Met-O), using respiratory chain electrons. Thus protects these proteins from oxidative-stress damage caused by reactive species of oxygen and chlorine generated by the host defense mechanisms. MsrPQ is essential for the maintenance of envelope integrity under bleach stress, rescuing a wide series of structurally unrelated periplasmic proteins from methionine oxidation, including the primary periplasmic chaperone SurA and the lipoprotein Pal. MsrQ provides electrons for reduction to the reductase catalytic subunit MsrP, using the quinone pool of the respiratory chain. This chain is Protein-methionine-sulfoxide reductase heme-binding subunit MsrQ, found in Shigella boydii serotype 18 (strain CDC 3083-94 / BS512).